The following is a 581-amino-acid chain: Terpene synthase 2, chloroplastic (581 aa).

The transit peptide at Met-1–Ala-34 directs the protein to the chloroplast. Arg-299, Asp-336, Asp-340, and Arg-480 together coordinate substrate. Asp-336 and Asp-340 together coordinate Mg(2+). A DDXXD motif motif is present at residues Asp-336–Asp-340. Mg(2+)-binding residues include Asp-483, Ser-487, and Glu-491.

It belongs to the terpene synthase family. In terms of assembly, monomer. Mg(2+) is required as a cofactor.

Its subcellular location is the plastid. It is found in the chloroplast. The catalysed reaction is (2E,6E)-farnesyl diphosphate + H2O = (3S,6E)-nerolidol + diphosphate. The enzyme catalyses (2E,6E,10E)-geranylgeranyl diphosphate + H2O = (6E,10E)-geranyllinalool + diphosphate. It carries out the reaction (2E)-geranyl diphosphate + H2O = (S)-linalool + diphosphate. The protein operates within secondary metabolite biosynthesis; terpenoid biosynthesis. Involved in sesquiterpene (C15), diterpene (C20) and monoterpene (C10) biosynthesis. Has sesquiterpene synthase activity, converting farnesyl diphosphate to nerolidol, the precursor of the volatile C11-homoterpene (E)-3,8-dimethyl-1,4,7-nonatriene (DMNT). Has diterpene synthase activity, converting geranylgeranyl diphosphate to (E,E)-geranyllinalool, the precursor of the volatile C16-homoterpene (E,E)-4,8,12-trimethyltrideca 1,3,7,11-tetraene (TMTT). Has monoterpene synthase activity, converting geranyl diphosphate into linalool. Forms only the S-isomers of the three tertiary terpene alcohols. The protein is Terpene synthase 2, chloroplastic of Zea mays (Maize).